The sequence spans 531 residues: Zinc finger protein 837 (531 aa).

A disordered region spans residues M1–E101. Residues A24–L50 show a composition bias toward basic and acidic residues. C2H2-type zinc fingers lie at residues Y271–H293, Y299–H321, Y363–H385, Y391–H413, Y419–H441, Y447–H469, Y475–H497, and Y503–H525.

Belongs to the krueppel C2H2-type zinc-finger protein family.

The protein localises to the nucleus. May be involved in transcriptional regulation. The sequence is that of Zinc finger protein 837 (ZNF837) from Homo sapiens (Human).